Here is an 801-residue protein sequence, read N- to C-terminus: Growth-differentiation transition protein 7 (801 aa).

The signal sequence occupies residues 1 to 22 (MIKTILIKLILLVIFCYHFLFA).

This sequence belongs to the GDT family.

The protein localises to the secreted. This Dictyostelium discoideum (Social amoeba) protein is Growth-differentiation transition protein 7 (gdt7).